Reading from the N-terminus, the 122-residue chain is Small ribosomal subunit protein uS13 (122 aa).

The tract at residues 99-122 (RGQRTHTNARTRKGPAKAIAGKKK) is disordered.

Belongs to the universal ribosomal protein uS13 family. As to quaternary structure, part of the 30S ribosomal subunit. Forms a loose heterodimer with protein S19. Forms two bridges to the 50S subunit in the 70S ribosome.

Its function is as follows. Located at the top of the head of the 30S subunit, it contacts several helices of the 16S rRNA. In the 70S ribosome it contacts the 23S rRNA (bridge B1a) and protein L5 of the 50S subunit (bridge B1b), connecting the 2 subunits; these bridges are implicated in subunit movement. Contacts the tRNAs in the A and P-sites. The sequence is that of Small ribosomal subunit protein uS13 from Rhodopseudomonas palustris (strain TIE-1).